Reading from the N-terminus, the 414-residue chain is MEAVRCRRGRENNKSPERIIRSLNHHQHDEELEEEVKTKKPIFRRVQVVYYLTRNGHLEHPHFIEVISPVNQPLRLRDVMNRLTILRGKCMTSQYAWSCKRSYRNGFVWNDLAENDVIYPSDCAEYVLKGSEITDKFQEVHVNRPLSGSIQEAPKSRLLRSKLKPQNRTASFDDAELYVGEEEEEEDGEYELYEEKTSYTSSTTPQSRCSRGVSTETMESTEQKPNLTKTEQDLQVRSDSSDLTRSNPVVKPRRHEVSTRVEDGDPVEPGSGRGSMWLQMISCGHIATKYYAPSVMNPRQKEENLRKGVLCKNIVKKTVVDDEREMIRFMSENPRFGNPQAEEKEYFSGSIVESVSQERVTAEPSLRRSNSFNEERSKIVEMAKETKKKEERSMAKVKCIPRTCLMSSSKQIKK.

Positions 44–135 (RRVQVVYYLT…YVLKGSEITD (92 aa)) are DIX-like oligomerization domain. Residues 171 to 273 (SFDDAELYVG…GDPVEPGSGR (103 aa)) form a disordered region. Residues 173–192 (DDAELYVGEEEEEEDGEYEL) show a composition bias toward acidic residues. Over residues 205-229 (PQSRCSRGVSTETMESTEQKPNLTK) the composition is skewed to polar residues. Residues 230–242 (TEQDLQVRSDSSD) are compositionally biased toward basic and acidic residues. The Association to cell membranes signature appears at 283-284 (CG).

This sequence belongs to the SOSEKI family. Homodimer. Forms long polymer filaments with other SOKs proteins polymers (e.g. SOK1, SOK2, SOK3 and SOK4) crucial for polar localization and biological activity. Binds to ANGUSTIFOLIA (AN). As to expression, expressed during embryogenesis and in roots.

The protein localises to the cell membrane. In terms of biological role, part of a three-gene cluster containing FLC, UFC and DFC, which is coordinately regulated in response to vernalization. Also regulated by FLX. SOSEKI proteins (SOK1-5) locally interpret global polarity cues and can influence cell division orientation to coordinate cell polarization relative to body axes, probably by guiding ANGUSTIFOLIA (AN) polarized localization. This chain is Protein SOSEKI 2, found in Arabidopsis thaliana (Mouse-ear cress).